A 100-amino-acid chain; its full sequence is Urease subunit gamma (100 aa).

Belongs to the urease gamma subunit family. As to quaternary structure, heterotrimer of UreA (gamma), UreB (beta) and UreC (alpha) subunits. Three heterotrimers associate to form the active enzyme.

The protein localises to the cytoplasm. The catalysed reaction is urea + 2 H2O + H(+) = hydrogencarbonate + 2 NH4(+). It functions in the pathway nitrogen metabolism; urea degradation; CO(2) and NH(3) from urea (urease route): step 1/1. This Blochmanniella pennsylvanica (strain BPEN) protein is Urease subunit gamma.